The primary structure comprises 336 residues: Glyceraldehyde-3-phosphate dehydrogenase (336 aa).

Residues 12 to 13 (RI), Asp-34, Arg-78, and Ser-120 contribute to the NAD(+) site. Residues 151-153 (SCT) and Thr-182 each bind D-glyceraldehyde 3-phosphate. The Nucleophile role is filled by Cys-152. Position 183 (Asn-183) interacts with NAD(+). D-glyceraldehyde 3-phosphate contacts are provided by residues 211–212 (NG) and Arg-234. Position 316 (Asn-316) interacts with NAD(+).

The protein belongs to the glyceraldehyde-3-phosphate dehydrogenase family. Homotetramer.

It is found in the cytoplasm. The enzyme catalyses D-glyceraldehyde 3-phosphate + phosphate + NAD(+) = (2R)-3-phospho-glyceroyl phosphate + NADH + H(+). It functions in the pathway carbohydrate degradation; glycolysis; pyruvate from D-glyceraldehyde 3-phosphate: step 1/5. Catalyzes the oxidative phosphorylation of glyceraldehyde 3-phosphate (G3P) to 1,3-bisphosphoglycerate (BPG) using the cofactor NAD. The first reaction step involves the formation of a hemiacetal intermediate between G3P and a cysteine residue, and this hemiacetal intermediate is then oxidized to a thioester, with concomitant reduction of NAD to NADH. The reduced NADH is then exchanged with the second NAD, and the thioester is attacked by a nucleophilic inorganic phosphate to produce BPG. The protein is Glyceraldehyde-3-phosphate dehydrogenase (gap) of Heyndrickxia coagulans (Weizmannia coagulans).